Here is a 270-residue protein sequence, read N- to C-terminus: UPF0354 protein BCG9842_B0431 (270 aa).

It belongs to the UPF0354 family.

This is UPF0354 protein BCG9842_B0431 from Bacillus cereus (strain G9842).